The chain runs to 59 residues: Large ribosomal subunit protein bL32 (59 aa).

This sequence belongs to the bacterial ribosomal protein bL32 family.

The protein is Large ribosomal subunit protein bL32 of Anaeromyxobacter dehalogenans (strain 2CP-C).